Here is a 939-residue protein sequence, read N- to C-terminus: Translation initiation factor IF-2 (939 aa).

The tract at residues 48-355 (KFAPAPKVEN…KPEKKEKEEE (308 aa)) is disordered. Over residues 79-93 (QQNQAPKQPQQGTQN) the composition is skewed to low complexity. The segment covering 114 to 130 (SRDKNSRRDNNNRDGQR) has biased composition (basic and acidic residues). Residues 131–257 (DNNGGYRNND…NNDRNNNGGF (127 aa)) are compositionally biased toward low complexity. Positions 287 to 355 (RNNDRRDSAP…KPEKKEKEEE (69 aa)) are enriched in basic and acidic residues. In terms of domain architecture, tr-type G spans 440-609 (PRPPVVCVMG…LLTAEVNELK (170 aa)). The segment at 449–456 (GHVDHGKT) is G1. 449–456 (GHVDHGKT) provides a ligand contact to GTP. Positions 474 to 478 (GITQK) are G2. Positions 495-498 (DTPG) are G3. Residues 495–499 (DTPGH) and 549–552 (NKID) contribute to the GTP site. Residues 549–552 (NKID) are G4. The G5 stretch occupies residues 585 to 587 (SAH).

This sequence belongs to the TRAFAC class translation factor GTPase superfamily. Classic translation factor GTPase family. IF-2 subfamily.

It localises to the cytoplasm. Its function is as follows. One of the essential components for the initiation of protein synthesis. Protects formylmethionyl-tRNA from spontaneous hydrolysis and promotes its binding to the 30S ribosomal subunits. Also involved in the hydrolysis of GTP during the formation of the 70S ribosomal complex. The protein is Translation initiation factor IF-2 of Lachnospira eligens (strain ATCC 27750 / DSM 3376 / VPI C15-48 / C15-B4) (Eubacterium eligens).